We begin with the raw amino-acid sequence, 382 residues long: D-alanine--D-alanine ligase (382 aa).

The region spanning 161-372 (KVVFESAGLH…YAELIDELIH (212 aa)) is the ATP-grasp domain. 193-248 (VDRLGFPVFVKPARAGSSMGISKVDSLEGLDAAIEEARRHDLKLVIEAGIVGREIE) contacts ATP. Residues Asp-326, Glu-339, and Asn-341 each contribute to the Mg(2+) site.

This sequence belongs to the D-alanine--D-alanine ligase family. It depends on Mg(2+) as a cofactor. Mn(2+) serves as cofactor.

It is found in the cytoplasm. It carries out the reaction 2 D-alanine + ATP = D-alanyl-D-alanine + ADP + phosphate + H(+). It functions in the pathway cell wall biogenesis; peptidoglycan biosynthesis. Its function is as follows. Cell wall formation. The sequence is that of D-alanine--D-alanine ligase from Pseudarthrobacter chlorophenolicus (strain ATCC 700700 / DSM 12829 / CIP 107037 / JCM 12360 / KCTC 9906 / NCIMB 13794 / A6) (Arthrobacter chlorophenolicus).